Here is a 191-residue protein sequence, read N- to C-terminus: Probable ribosome biogenesis protein RLP24 (191 aa).

Serine 136 is subject to Phosphoserine.

Belongs to the eukaryotic ribosomal protein eL24 family. Associated with nucleolar and cytoplasmic pre-60S particles. At the end of biogenesis it dissociates from cytoplasmic pre-60S particles and is likely to be exchanged for its ribosomal homologue, RPL24.

Its subcellular location is the nucleus. It localises to the nucleolus. Its function is as follows. Involved in the biogenesis of the 60S ribosomal subunit. Ensures the docking of NOG1 to pre-60S particles. The polypeptide is Probable ribosome biogenesis protein RLP24 (RpL24-like) (Drosophila melanogaster (Fruit fly)).